The sequence spans 312 residues: Malate dehydrogenase (312 aa).

Residues 7–13 (GAAGGIG) and D34 each bind NAD(+). Substrate is bound by residues R81 and R87. Residues N94 and 117 to 119 (ITN) contribute to the NAD(+) site. Residues N119 and R153 each contribute to the substrate site. Catalysis depends on H177, which acts as the Proton acceptor. M227 is a binding site for NAD(+).

It belongs to the LDH/MDH superfamily. MDH type 1 family. Homodimer.

It carries out the reaction (S)-malate + NAD(+) = oxaloacetate + NADH + H(+). In terms of biological role, catalyzes the reversible oxidation of malate to oxaloacetate. The chain is Malate dehydrogenase from Enterobacter sp. (strain 638).